Consider the following 179-residue polypeptide: Interleukin-22 (179 aa).

The first 33 residues, 1–33 (MAVLQKSMSFSLMGTLAASCLLLIALWAQEANA), serve as a signal peptide directing secretion. 2 disulfides stabilise this stretch: C40-C132 and C89-C178. 3 N-linked (GlcNAc...) asparagine glycosylation sites follow: N54, N68, and N97.

Belongs to the IL-10 family.

The protein localises to the secreted. Functionally, cytokine that plays a critical role in modulating tissue responses during inflammation. Plays an essential role in the regeneration of epithelial cells to maintain barrier function after injury and for the prevention of further tissue damage. Unlike most of the cytokines, has no effect on immune cells. Signals through a heterodimeric receptor composed of two subunits, the specific receptor IL22RA1 which is present on non-immune cells in many organs and the shared subunit IL10RB. Ligation of IL22RA1 with IL22 induces activation of the tyrosine kinases JAK1 and TYK2, which in turn activates STAT3. In turn, promotes cell survival and proliferation through STAT3, ERK1/2 and PI3K/AKT pathways. Promotes phosphorylation of GSK3B at 'Ser-9' and CTTN. Promotes epithelial cell spreading. This chain is Interleukin-22 (Il22), found in Mus musculus (Mouse).